A 169-amino-acid chain; its full sequence is Ureidoglycolate lyase (169 aa).

Belongs to the ureidoglycolate lyase family. In terms of assembly, homodimer. The cofactor is Ni(2+).

It catalyses the reaction (S)-ureidoglycolate = urea + glyoxylate. It functions in the pathway nitrogen metabolism; (S)-allantoin degradation. In terms of biological role, catalyzes the catabolism of the allantoin degradation intermediate (S)-ureidoglycolate, generating urea and glyoxylate. Involved in the utilization of allantoin as nitrogen source. This chain is Ureidoglycolate lyase, found in Brucella anthropi (strain ATCC 49188 / DSM 6882 / CCUG 24695 / JCM 21032 / LMG 3331 / NBRC 15819 / NCTC 12168 / Alc 37) (Ochrobactrum anthropi).